The sequence spans 587 residues: Pentatricopeptide repeat-containing protein OGR1, mitochondrial (587 aa).

Residues 1-30 constitute a mitochondrion transit peptide; it reads MSVSAAARHLESLLPRLASLRHYLQFHARL. 8 PPR repeats span residues 145-179, 200-203, 217-251, 252-286, 287-315, 319-349, 351-381, and 383-417; these read DVRL…DVAT, FHRL, NEVT…GLDR, NVRV…DQTL, VSYN…MPTR, DGVT…MRVA, NMKH…MPFP, and DIVL…GSNV. Residues 386–461 form a type E motif region; that stretch reads LWQTLLGAAK…VPGFSYTEID (76 aa). Residues 462-492 are type E(+) motif; sequence GVMHKFINGDKEHPRWQEIYRALEDIVSRIS. Residues 493-587 are type DYW motif; it reads ELGYEPETSN…DGQCSCRDYW (95 aa).

The protein localises to the mitochondrion. In terms of biological role, involved in multiple sites RNA editing events in mitochondria. Essential for C-to-U RNA editing at seven specific sites of nad2, nad4, cox2, cox3 and ccmC transcripts, all coding for proteins involved in the mitochondrial electron transport chain coupled to ATP generation. Required for normal growth and development. This chain is Pentatricopeptide repeat-containing protein OGR1, mitochondrial, found in Oryza sativa subsp. japonica (Rice).